We begin with the raw amino-acid sequence, 140 residues long: Lysozyme c-1 (140 aa).

Positions 1–20 (MKVFSTVLLAIVACCAVAEA) are cleaved as a signal peptide. One can recognise a C-type lysozyme domain in the interval 21–140 (KTFGKCELAK…KKLPNVSSCF (120 aa)). 4 cysteine pairs are disulfide-bonded: cysteine 26–cysteine 139, cysteine 47–cysteine 128, cysteine 81–cysteine 94, and cysteine 90–cysteine 108. Residues glutamate 52 and aspartate 69 contribute to the active site.

This sequence belongs to the glycosyl hydrolase 22 family. Expressed in salivary glands and Malpighian tubules.

It carries out the reaction Hydrolysis of (1-&gt;4)-beta-linkages between N-acetylmuramic acid and N-acetyl-D-glucosamine residues in a peptidoglycan and between N-acetyl-D-glucosamine residues in chitodextrins.. Its function is as follows. Lysozymes have primarily a bacteriolytic function; those in tissues and body fluids are associated with the monocyte-macrophage system and enhance the activity of immunoagents. This chain is Lysozyme c-1, found in Anopheles gambiae (African malaria mosquito).